The primary structure comprises 432 residues: Serine hydroxymethyltransferase (432 aa).

(6S)-5,6,7,8-tetrahydrofolate contacts are provided by residues L131 and 135–137 (GHL). At K240 the chain carries N6-(pyridoxal phosphate)lysine.

Belongs to the SHMT family. In terms of assembly, homodimer. Requires pyridoxal 5'-phosphate as cofactor.

The protein localises to the cytoplasm. It carries out the reaction (6R)-5,10-methylene-5,6,7,8-tetrahydrofolate + glycine + H2O = (6S)-5,6,7,8-tetrahydrofolate + L-serine. It participates in one-carbon metabolism; tetrahydrofolate interconversion. The protein operates within amino-acid biosynthesis; glycine biosynthesis; glycine from L-serine: step 1/1. Its function is as follows. Catalyzes the reversible interconversion of serine and glycine with tetrahydrofolate (THF) serving as the one-carbon carrier. This reaction serves as the major source of one-carbon groups required for the biosynthesis of purines, thymidylate, methionine, and other important biomolecules. Also exhibits THF-independent aldolase activity toward beta-hydroxyamino acids, producing glycine and aldehydes, via a retro-aldol mechanism. The protein is Serine hydroxymethyltransferase of Bradyrhizobium diazoefficiens (strain JCM 10833 / BCRC 13528 / IAM 13628 / NBRC 14792 / USDA 110).